The chain runs to 550 residues: Mitochondrial distribution and morphology protein 12 (550 aa).

The SMP-LTD domain occupies 1–550 (MSIELNWETL…VYPSFWTFLV (550 aa)). Disordered stretches follow at residues 62-168 (ITDP…PQDL), 218-356 (PPQW…TKYR), and 474-493 (TLASPAGAAPGSDEKAGGNT). Residues 69–90 (FYEEDPDVDYDDEDEDVEETHD) show a composition bias toward acidic residues. A compositionally biased stretch (low complexity) spans 125-140 (VASSSSSSVGRGSAPR). Polar residues-rich tracts occupy residues 148–157 (PTKSNININT), 251–269 (PSHSRTSSTVSNADLQTAS), 278–289 (TPTSFLRSGQQT), and 296–323 (VSTLAPTSVGTSRPPTRDLTTTMSTAQE).

The protein belongs to the MDM12 family. In terms of assembly, component of the ER-mitochondria encounter structure (ERMES) or MDM complex, composed of MMM1, MDM10, MDM12 and MDM34. An MMM1 homodimer associates with one molecule of MDM12 on each side in a pairwise head-to-tail manner, and the SMP-LTD domains of MMM1 and MDM12 generate a continuous hydrophobic tunnel for phospholipid trafficking.

The protein localises to the mitochondrion outer membrane. It localises to the endoplasmic reticulum membrane. Component of the ERMES/MDM complex, which serves as a molecular tether to connect the endoplasmic reticulum (ER) and mitochondria. Components of this complex are involved in the control of mitochondrial shape and protein biogenesis, and function in nonvesicular lipid trafficking between the ER and mitochondria. MDM12 is required for the interaction of the ER-resident membrane protein MMM1 and the outer mitochondrial membrane-resident beta-barrel protein MDM10. The MDM12-MMM1 subcomplex functions in the major beta-barrel assembly pathway that is responsible for biogenesis of all mitochondrial outer membrane beta-barrel proteins, and acts in a late step after the SAM complex. The MDM10-MDM12-MMM1 subcomplex further acts in the TOM40-specific pathway after the action of the MDM12-MMM1 complex. Essential for establishing and maintaining the structure of mitochondria and maintenance of mtDNA nucleoids. The protein is Mitochondrial distribution and morphology protein 12 of Pyricularia oryzae (strain 70-15 / ATCC MYA-4617 / FGSC 8958) (Rice blast fungus).